Consider the following 190-residue polypeptide: Crossover junction endodeoxyribonuclease RuvC (190 aa).

Active-site residues include aspartate 7, glutamate 68, and aspartate 141. Residues aspartate 7, glutamate 68, and aspartate 141 each coordinate Mg(2+).

Belongs to the RuvC family. Homodimer which binds Holliday junction (HJ) DNA. The HJ becomes 2-fold symmetrical on binding to RuvC with unstacked arms; it has a different conformation from HJ DNA in complex with RuvA. In the full resolvosome a probable DNA-RuvA(4)-RuvB(12)-RuvC(2) complex forms which resolves the HJ. Requires Mg(2+) as cofactor.

It localises to the cytoplasm. It carries out the reaction Endonucleolytic cleavage at a junction such as a reciprocal single-stranded crossover between two homologous DNA duplexes (Holliday junction).. The RuvA-RuvB-RuvC complex processes Holliday junction (HJ) DNA during genetic recombination and DNA repair. Endonuclease that resolves HJ intermediates. Cleaves cruciform DNA by making single-stranded nicks across the HJ at symmetrical positions within the homologous arms, yielding a 5'-phosphate and a 3'-hydroxyl group; requires a central core of homology in the junction. The consensus cleavage sequence is 5'-(A/T)TT(C/G)-3'. Cleavage occurs on the 3'-side of the TT dinucleotide at the point of strand exchange. HJ branch migration catalyzed by RuvA-RuvB allows RuvC to scan DNA until it finds its consensus sequence, where it cleaves and resolves the cruciform DNA. This Endomicrobium trichonymphae protein is Crossover junction endodeoxyribonuclease RuvC.